Reading from the N-terminus, the 537-residue chain is MSKLIEYDETARHAMEVGMNKLADTVRVTLGPRGRHVVLAKAFGGPTITNDGVTVAREIDLEDPFENLGAQLVKSVATKTNDVAGDGTTTATVLAQALVKGGLRMVAAGANPVALGAGISKAADAVSEALLAVATPVAGKDAITQVATVSSRDEQIGALVGEGMNKVGTDGVVSVEESSTLDTELEFTEGVGFDKGFLSAYFVTDFDSQQAVLDDPLVLLHQEKISSLPELLPMLEKVTESGKPLLIVAEDLEGEALATLVVNSIRKTLKAVAVKSPFFGDRRKAFLEDLAIVTGGQVVNPETGLVLREVGTDVLGSARRVVVSKDDTIIVDGGGSNDAVAKRVNQLRAEIEVSDSEWDREKLQERVAKLAGGVAVIKVGAVTETALKKRKESVEDAVAAAKASIEEGIIAGGGSALVQCGAALKQLRTSLTGDEALGIDVFFEALKAPLYWIATNAGLDGAVVVDKVSGLPAGHGLNASTLGYGDLVADGVVDPVKVTRSAVLNAASVARMMLTTETAVVDKPAKTEEHDHHGHAH.

ATP-binding positions include 29–32 (TLGP), 86–90 (DGTTT), Gly413, and Asp494.

The protein belongs to the chaperonin (HSP60) family. Forms a cylinder of 14 subunits composed of two heptameric rings stacked back-to-back. Interacts with the co-chaperonin GroES.

Its subcellular location is the cytoplasm. It carries out the reaction ATP + H2O + a folded polypeptide = ADP + phosphate + an unfolded polypeptide.. Its function is as follows. Together with its co-chaperonin GroES, plays an essential role in assisting protein folding. The GroEL-GroES system forms a nano-cage that allows encapsulation of the non-native substrate proteins and provides a physical environment optimized to promote and accelerate protein folding. The chain is Chaperonin GroEL 1 from Mycobacterium leprae (strain TN).